A 222-amino-acid polypeptide reads, in one-letter code: Cysteine protease inhibitor 1 (222 aa).

A signal peptide spans 1–26 (MKSINILSFLLLSSTLSLVAFARSFT). Positions 27–42 (SENPIVLPTTCHDDDN) are excised as a propeptide. Positions 29–34 (NPIVLP) match the Vacuolar targeting signal motif. Disulfide bonds link cysteine 84-cysteine 136 and cysteine 185-cysteine 191.

Belongs to the protease inhibitor I3 (leguminous Kunitz-type inhibitor) family. As to expression, tubers, leaves.

The protein resides in the vacuole. Functionally, potent inhibitor of cathepsin l (cysteine protease). Does not inhibit trypsin or chymotrypsin (serine proteases). May protect the plant by inhibiting proteases of invading organisms. The chain is Cysteine protease inhibitor 1 from Solanum tuberosum (Potato).